The following is a 1021-amino-acid chain: Collagen alpha-1(I) chain (1021 aa).

Positions 1 to 1021 (DEKSAGGISV…PGPPGPPGPP (1021 aa)) are disordered. Lysine 3 is subject to Allysine. Position 4 is a phosphoserine (serine 4). A 4-hydroxyproline mark is found at proline 23, proline 26, proline 29, proline 38, proline 41, proline 44, proline 59, proline 74, proline 80, proline 89, and proline 95. Over residues 31-50 (PQGFQGPPGEPGEPGASGPM) the composition is skewed to low complexity. Basic and acidic residues predominate over residues 62–76 (NGDDGEAGKPGRPGE). Lysine 98 is subject to 5-hydroxylysine; alternate. O-linked (Gal...) hydroxylysine; alternate glycosylation occurs at lysine 98. Serine 104 is subject to Phosphoserine. A compositionally biased stretch (low complexity) spans 112–128 (DAGPAGPKGEPGSPGEN). 16 positions are modified to 4-hydroxyproline: proline 122, proline 125, proline 131, proline 140, proline 146, proline 167, proline 176, proline 179, proline 206, proline 209, proline 221, proline 227, proline 236, proline 242, proline 245, and proline 260. A compositionally biased stretch (low complexity) spans 146-164 (PGASGPAGARGNDGATGAA). The segment covering 166–178 (PPGPTGPAGPPGF) has biased composition (pro residues). Positions 212-262 (AGAAGPAGNPGADGQPGAKGANGAPGIAGAPGFPGARGPSGPQGPSGAPGP) are enriched in low complexity. 5-hydroxylysine is present on lysine 263. 8 positions are modified to 4-hydroxyproline: proline 269, proline 272, proline 284, proline 293, proline 308, proline 314, proline 323, and proline 329. Positions 318-327 (GERGGPGSRG) are enriched in gly residues. 5-hydroxylysine is present on lysine 338. 4-hydroxyproline occurs at positions 347, 356, 362, 368, 377, 380, 389, 398, 404, 416, 425, 434, 437, 455, 472, 478, 484, 490, 496, 502, 514, 523, 534, 546, 549, 555, 561, and 570. The segment covering 371 to 425 (KGLTGSPGSPGPDGKTGPPGPAGQDGRPGPAGPPGARGQAGVMGFPGPKGAAGEP) has biased composition (low complexity). Residues 484–493 (PGEAGKPGEQ) are compositionally biased toward low complexity. Positions 536-558 (NDGAKGDAGAPGAPGSQGAPGLQ) are enriched in low complexity. Residue lysine 582 is modified to 5-hydroxylysine. 4-hydroxyproline is present on residues proline 588 and proline 603. The segment covering 615 to 629 (AGPSGPAGPTGARGA) has biased composition (low complexity). The residue at position 618 (serine 618) is a Phosphoserine. 4-hydroxyproline is present on residues proline 630, proline 636, proline 639, proline 648, proline 654, proline 681, and proline 690. Residues 642 to 672 (AGFAGPPGADGQPGAKGEPGDAGAKGDAGPS) are compositionally biased toward low complexity. Lysine 693 is subject to 5-hydroxylysine. Over residues 698 to 714 (SAGPPGATGFPGAAGRV) the composition is skewed to low complexity. Proline 702 and proline 708 each carry 4-hydroxyproline. The residue at position 716 (proline 716) is a 3-hydroxyproline. 4-hydroxyproline occurs at positions 717, 726, 729, 750, 759, 768, 777, 794, 803, 806, 812, 827, 833, 839, 848, and 854. Residues 743–752 (ETGPAGRPGE) show a composition bias toward low complexity. Low complexity predominate over residues 762–777 (SGEKGSPGADGPAGAP). The segment covering 826–836 (PPGPMGPPGLA) has biased composition (pro residues). Residues 838–853 (PPGEAGREGSPGAEGS) are compositionally biased toward low complexity. Lysine 863 bears the 5-hydroxylysine mark. The span at 871 to 886 (PGPPGAPGAPGAPGPV) shows a compositional bias: pro residues. A 4-hydroxyproline mark is found at proline 874, proline 877, and proline 880. A compositionally biased stretch (low complexity) spans 907–921 (AGPAGARGPAGPQGP). Basic and acidic residues predominate over residues 922–936 (RGDKGETGEQGDRGI). 5-hydroxylysine is present on lysine 925. The residue at position 937 (lysine 937) is a 5-hydroxylysine; alternate. O-linked (Gal...) hydroxylysine; alternate glycosylation is present at lysine 937. Residues proline 952, proline 955, proline 973, and proline 988 each carry the 4-hydroxyproline modification. Over residues 955 to 988 (PGEQGPSGASGPAGPRGPPGSAGTPGKDGLNGLP) the composition is skewed to low complexity. Proline 993 is subject to 3-hydroxyproline. Proline 994 is modified (4-hydroxyproline). The segment covering 1006-1021 (VGPPGPPGPPGPPGPP) has biased composition (pro residues). Proline 1008 carries the post-translational modification 3-hydroxyproline. At proline 1009 the chain carries 4-hydroxyproline. The residue at position 1011 (proline 1011) is a 3-hydroxyproline. Proline 1012 is subject to 4-hydroxyproline. Proline 1014 carries the post-translational modification 3-hydroxyproline. A 4-hydroxyproline mark is found at proline 1015, proline 1018, and proline 1021.

The protein belongs to the fibrillar collagen family. As to quaternary structure, trimers of one alpha 2(I) and two alpha 1(I) chains. Contains mostly 4-hydroxyproline. Proline residues at the third position of the tripeptide repeating unit (G-X-Y) are hydroxylated in some or all of the chains. Post-translationally, contains 3-hydroxyproline at a few sites. This modification occurs on the first proline residue in the sequence motif Gly-Pro-Hyp, where Hyp is 4-hydroxyproline. In terms of processing, lysine residues at the third position of the tripeptide repeating unit (G-X-Y) are 5-hydroxylated in some or all of the chains. O-glycosylated on hydroxylated lysine residues. The O-linked glycan consists of a Glc-Gal disaccharide. As to expression, expressed in bones.

The protein resides in the secreted. It localises to the extracellular space. Its subcellular location is the extracellular matrix. Functionally, type I collagen is a member of group I collagen (fibrillar forming collagen). In Doedicurus sp. (South American giant glyptodont), this protein is Collagen alpha-1(I) chain.